A 267-amino-acid polypeptide reads, in one-letter code: Tetrahydromethanopterin S-methyltransferase subunit C (267 aa).

7 helical membrane-spanning segments follow: residues I19–P39, I75–G95, A97–A117, T140–V160, Y162–H182, L198–L218, and G221–S241.

Belongs to the MtrC family. In terms of assembly, the complex is composed of 8 subunits; MtrA, MtrB, MtrC, MtrD, MtrE, MtrF, MtrG and MtrH.

The protein resides in the cell membrane. The enzyme catalyses 5-methyl-5,6,7,8-tetrahydromethanopterin + coenzyme M + 2 Na(+)(in) = 5,6,7,8-tetrahydromethanopterin + methyl-coenzyme M + 2 Na(+)(out). Its pathway is one-carbon metabolism; methanogenesis from CO(2); methyl-coenzyme M from 5,10-methylene-5,6,7,8-tetrahydromethanopterin: step 2/2. Its function is as follows. Part of a complex that catalyzes the formation of methyl-coenzyme M and tetrahydromethanopterin from coenzyme M and methyl-tetrahydromethanopterin. This is an energy-conserving, sodium-ion translocating step. This chain is Tetrahydromethanopterin S-methyltransferase subunit C, found in Methanosarcina barkeri (strain Fusaro / DSM 804).